The chain runs to 947 residues: Translation initiation factor IF-2 (947 aa).

Positions Leu-47–Arg-332 are disordered. A compositionally biased stretch (basic and acidic residues) spans Ala-86–Leu-95. A compositionally biased stretch (pro residues) spans Ala-105–Ala-123. The segment covering Ala-131–Ala-145 has biased composition (low complexity). Composition is skewed to pro residues over residues Pro-146 to Pro-171 and Pro-210 to Pro-225. Residues Arg-255 to Gly-318 show a composition bias toward gly residues. Basic residues predominate over residues Arg-322 to Lys-331. One can recognise a tr-type G domain in the interval Thr-443–Leu-614. The segment at Gly-452 to Thr-459 is G1. Position 452 to 459 (Gly-452 to Thr-459) interacts with GTP. Residues Gly-477–His-481 form a G2 region. Residues Asp-502 to Gly-505 are G3. GTP contacts are provided by residues Asp-502–His-506 and Asn-556–Asp-559. The interval Asn-556–Asp-559 is G4. The G5 stretch occupies residues Ser-592 to Lys-594.

It belongs to the TRAFAC class translation factor GTPase superfamily. Classic translation factor GTPase family. IF-2 subfamily.

It is found in the cytoplasm. Its function is as follows. One of the essential components for the initiation of protein synthesis. Protects formylmethionyl-tRNA from spontaneous hydrolysis and promotes its binding to the 30S ribosomal subunits. Also involved in the hydrolysis of GTP during the formation of the 70S ribosomal complex. In Mycobacterium marinum (strain ATCC BAA-535 / M), this protein is Translation initiation factor IF-2.